Consider the following 187-residue polypeptide: Adenylate kinase (187 aa).

Residue 10-15 (GSGKGT) coordinates ATP. The segment at 30–59 (STGDLLRSEVVAGTPLGLQAKQVMAQGDLV) is NMP. Residues threonine 31, arginine 36, 57-59 (DLV), 85-88 (GYPR), and glutamine 92 each bind AMP. Residues 126-136 (GRAQAEGREDD) are LID. Arginine 127 provides a ligand contact to ATP. 2 residues coordinate AMP: arginine 133 and arginine 144. Glycine 172 lines the ATP pocket.

This sequence belongs to the adenylate kinase family. In terms of assembly, monomer.

The protein localises to the cytoplasm. The enzyme catalyses AMP + ATP = 2 ADP. It functions in the pathway purine metabolism; AMP biosynthesis via salvage pathway; AMP from ADP: step 1/1. Functionally, catalyzes the reversible transfer of the terminal phosphate group between ATP and AMP. Plays an important role in cellular energy homeostasis and in adenine nucleotide metabolism. The sequence is that of Adenylate kinase from Xylella fastidiosa (strain M12).